A 487-amino-acid chain; its full sequence is Bifunctional protein GlmU (487 aa).

A pyrophosphorylase region spans residues 1–240; it reads MAEVTNCAAI…PEELSGVNDR (240 aa). Residues 12–15, Lys26, Gln83, and 88–89 each bind UDP-N-acetyl-alpha-D-glucosamine; these read LAAG and GT. Asp113 is a Mg(2+) binding site. Residues Gly150, Glu165, Asn180, and Asn238 each contribute to the UDP-N-acetyl-alpha-D-glucosamine site. Asn238 is a Mg(2+) binding site. A linker region spans residues 241 to 261; the sequence is VQLAAAGRLLNRRMVEEAMRG. The segment at 262 to 487 is N-acetyltransferase; the sequence is GTTIVDPDTT…DAKANDQTTN (226 aa). Arg343 and Lys361 together coordinate UDP-N-acetyl-alpha-D-glucosamine. His373 serves as the catalytic Proton acceptor. Positions 376 and 387 each coordinate UDP-N-acetyl-alpha-D-glucosamine. Residues Ala390, 396-397, Ser415, and Ala433 each bind acetyl-CoA; that span reads NY. Positions 449 to 487 are disordered; that stretch reads SGGKQRNIEGWVQKKRPGTPAAEAAGKAQDAKANDQTTN.

The protein in the N-terminal section; belongs to the N-acetylglucosamine-1-phosphate uridyltransferase family. This sequence in the C-terminal section; belongs to the transferase hexapeptide repeat family. Homotrimer. It depends on Mg(2+) as a cofactor.

Its subcellular location is the cytoplasm. It carries out the reaction alpha-D-glucosamine 1-phosphate + acetyl-CoA = N-acetyl-alpha-D-glucosamine 1-phosphate + CoA + H(+). It catalyses the reaction N-acetyl-alpha-D-glucosamine 1-phosphate + UTP + H(+) = UDP-N-acetyl-alpha-D-glucosamine + diphosphate. It functions in the pathway nucleotide-sugar biosynthesis; UDP-N-acetyl-alpha-D-glucosamine biosynthesis; N-acetyl-alpha-D-glucosamine 1-phosphate from alpha-D-glucosamine 6-phosphate (route II): step 2/2. It participates in nucleotide-sugar biosynthesis; UDP-N-acetyl-alpha-D-glucosamine biosynthesis; UDP-N-acetyl-alpha-D-glucosamine from N-acetyl-alpha-D-glucosamine 1-phosphate: step 1/1. Its pathway is bacterial outer membrane biogenesis; LPS lipid A biosynthesis. Functionally, catalyzes the last two sequential reactions in the de novo biosynthetic pathway for UDP-N-acetylglucosamine (UDP-GlcNAc). The C-terminal domain catalyzes the transfer of acetyl group from acetyl coenzyme A to glucosamine-1-phosphate (GlcN-1-P) to produce N-acetylglucosamine-1-phosphate (GlcNAc-1-P), which is converted into UDP-GlcNAc by the transfer of uridine 5-monophosphate (from uridine 5-triphosphate), a reaction catalyzed by the N-terminal domain. This Corynebacterium aurimucosum (strain ATCC 700975 / DSM 44827 / CIP 107346 / CN-1) (Corynebacterium nigricans) protein is Bifunctional protein GlmU.